A 529-amino-acid chain; its full sequence is Bifunctional purine biosynthesis protein PurH (529 aa).

The MGS-like domain occupies 1-148; sequence MQQRRPVRRA…KNHKDVAIVV (148 aa). K287 is subject to N6-acetyllysine.

Belongs to the PurH family.

It carries out the reaction (6R)-10-formyltetrahydrofolate + 5-amino-1-(5-phospho-beta-D-ribosyl)imidazole-4-carboxamide = 5-formamido-1-(5-phospho-D-ribosyl)imidazole-4-carboxamide + (6S)-5,6,7,8-tetrahydrofolate. It catalyses the reaction IMP + H2O = 5-formamido-1-(5-phospho-D-ribosyl)imidazole-4-carboxamide. It participates in purine metabolism; IMP biosynthesis via de novo pathway; 5-formamido-1-(5-phospho-D-ribosyl)imidazole-4-carboxamide from 5-amino-1-(5-phospho-D-ribosyl)imidazole-4-carboxamide (10-formyl THF route): step 1/1. Its pathway is purine metabolism; IMP biosynthesis via de novo pathway; IMP from 5-formamido-1-(5-phospho-D-ribosyl)imidazole-4-carboxamide: step 1/1. The polypeptide is Bifunctional purine biosynthesis protein PurH (Escherichia coli O7:K1 (strain IAI39 / ExPEC)).